A 346-amino-acid chain; its full sequence is G-protein coupled receptor homolog U12 (346 aa).

Residues 1–31 (MICYSFAKNVTFAFLIILQNFFSQHDEEYKY) lie on the Extracellular side of the membrane. The helical transmembrane segment at 32–56 (NYTCITPTVRKAQRLESVINGIMLT) threads the bilayer. Topologically, residues 57–83 (LILPVSTVVICTLLIYYKWTKQTITSP) are cytoplasmic. A helical membrane pass occupies residues 84–108 (YLITLFISDSLHSLTVLLLTLNREA). At 109-115 (LTNLNQA) the chain is on the extracellular side. The chain crosses the membrane as a helical span at residues 116–142 (LCQCVLFVYSASCTYSLCMLAVISTIR). The Cytoplasmic portion of the chain corresponds to 143 to 159 (YRTLQRRTLNDKNNNHI). Residues 160-181 (KRNVGILFLSSAMCAIPAVLYV) traverse the membrane as a helical segment. Residues 182-208 (QVEKKKGNYGKCNIHISTQKAYDLFIG) lie on the Extracellular side of the membrane. A helical membrane pass occupies residues 209–229 (IKIVYCFLWGIFPTVIFSYFY). At 230–245 (VIFGKTLRALTQSKHN) the chain is on the cytoplasmic side. A helical transmembrane segment spans residues 246–272 (KTLSFISLLILSFLCIQIPNLLVMSVE). Residues 273-286 (IFFLYIANTSCLGT) lie on the Extracellular side of the membrane. Residues 287-310 (IQREIVQIISRLMPEIHCLSNPLV) form a helical membrane-spanning segment. Residues 311–346 (YAFTRTDFRLRFYDFIKCNLCNSSLKRKRNPLTIKN) are Cytoplasmic-facing.

This sequence belongs to the G-protein coupled receptor 1 family.

The protein localises to the host cell membrane. This chain is G-protein coupled receptor homolog U12 (U12), found in Homo sapiens (Human).